A 690-amino-acid chain; its full sequence is Elongation factor G (690 aa).

In terms of domain architecture, tr-type G spans 8–283 (SKCRNIGIMA…AVVDFLPAPN (276 aa)). GTP contacts are provided by residues 17–24 (AHIDAGKT), 81–85 (DTPGH), and 135–138 (NKMD).

The protein belongs to the TRAFAC class translation factor GTPase superfamily. Classic translation factor GTPase family. EF-G/EF-2 subfamily.

The protein localises to the cytoplasm. Its function is as follows. Catalyzes the GTP-dependent ribosomal translocation step during translation elongation. During this step, the ribosome changes from the pre-translocational (PRE) to the post-translocational (POST) state as the newly formed A-site-bound peptidyl-tRNA and P-site-bound deacylated tRNA move to the P and E sites, respectively. Catalyzes the coordinated movement of the two tRNA molecules, the mRNA and conformational changes in the ribosome. The protein is Elongation factor G of Ehrlichia chaffeensis (strain ATCC CRL-10679 / Arkansas).